The sequence spans 482 residues: tRNA sulfurtransferase (482 aa).

Residues 61-165 enclose the THUMP domain; it reads LAIRDALTRI…DDRLLLIKGR (105 aa). ATP contacts are provided by residues 183 to 184, lysine 265, glycine 287, and glutamine 296; that span reads LI. Cysteine 344 and cysteine 456 are oxidised to a cystine. A Rhodanese domain is found at 404-482; the sequence is FGPNDVILDI…GFANVKVYRP (79 aa). The active-site Cysteine persulfide intermediate is the cysteine 456.

The protein belongs to the ThiI family.

Its subcellular location is the cytoplasm. The catalysed reaction is [ThiI sulfur-carrier protein]-S-sulfanyl-L-cysteine + a uridine in tRNA + 2 reduced [2Fe-2S]-[ferredoxin] + ATP + H(+) = [ThiI sulfur-carrier protein]-L-cysteine + a 4-thiouridine in tRNA + 2 oxidized [2Fe-2S]-[ferredoxin] + AMP + diphosphate. It carries out the reaction [ThiS sulfur-carrier protein]-C-terminal Gly-Gly-AMP + S-sulfanyl-L-cysteinyl-[cysteine desulfurase] + AH2 = [ThiS sulfur-carrier protein]-C-terminal-Gly-aminoethanethioate + L-cysteinyl-[cysteine desulfurase] + A + AMP + 2 H(+). The protein operates within cofactor biosynthesis; thiamine diphosphate biosynthesis. Catalyzes the ATP-dependent transfer of a sulfur to tRNA to produce 4-thiouridine in position 8 of tRNAs, which functions as a near-UV photosensor. Also catalyzes the transfer of sulfur to the sulfur carrier protein ThiS, forming ThiS-thiocarboxylate. This is a step in the synthesis of thiazole, in the thiamine biosynthesis pathway. The sulfur is donated as persulfide by IscS. The sequence is that of tRNA sulfurtransferase from Salmonella choleraesuis (strain SC-B67).